The following is a 63-amino-acid chain: Large ribosomal subunit protein bL35 (63 aa).

The segment at 24–44 is disordered; it reads RAKAYRSHRATGKTTKQKRQL.

The protein belongs to the bacterial ribosomal protein bL35 family.

The sequence is that of Large ribosomal subunit protein bL35 from Mycoplasma mycoides subsp. mycoides SC (strain CCUG 32753 / NCTC 10114 / PG1).